The chain runs to 217 residues: MNQSLLAPFGTAIERVEAGLNALRQGQGVLVVDDEDRENEGDLIFAAETLTNAQMAMLIRECSGIVCLCLPDEKIKALELPAMVEHNSSQYGTAFTVSIEATVGVTTGVSAADRVTTIKAAIADNAKPSDLARPGHVYPLRAQPGGVLTRRGHTEGTIDLVQLAGLKPAGVLCEVTNPDGTMARLPEIIAFGALHNMPVLTIEDIVVYRKSLLAKVG.

Residues 37–38 (RE), aspartate 42, 150–154 (RRGHT), and glutamate 174 each bind D-ribulose 5-phosphate. Position 38 (glutamate 38) interacts with Mg(2+). Histidine 153 contacts Mg(2+).

The protein belongs to the DHBP synthase family. Homodimer. Mg(2+) serves as cofactor. Requires Mn(2+) as cofactor.

The catalysed reaction is D-ribulose 5-phosphate = (2S)-2-hydroxy-3-oxobutyl phosphate + formate + H(+). The protein operates within cofactor biosynthesis; riboflavin biosynthesis; 2-hydroxy-3-oxobutyl phosphate from D-ribulose 5-phosphate: step 1/1. Catalyzes the conversion of D-ribulose 5-phosphate to formate and 3,4-dihydroxy-2-butanone 4-phosphate. This is 3,4-dihydroxy-2-butanone 4-phosphate synthase from Shewanella baltica (strain OS155 / ATCC BAA-1091).